Reading from the N-terminus, the 321-residue chain is Epiphycan (321 aa).

The N-terminal stretch at 1–19 (MKALARLIVGLLILDAAVT) is a signal peptide. Residue Thr-60 is glycosylated (O-linked (GalNAc...) threonine). Ser-64 is a glycosylation site (O-linked (Xyl...) (dermatan sulfate) serine). The segment at 64 to 100 (SGNRELLTPPPQPEEAEEEEEEESTPRLIDGSSPQEP) is disordered. Residues 77-86 (EEAEEEEEEE) show a composition bias toward acidic residues. Residue Ser-95 is glycosylated (O-linked (GalNAc...) serine). One can recognise an LRRNT domain in the interval 105-142 (VLGPQTNEDFPTCLLCTCISTTVYCDDHELDAIPPLPK). Cys-117 and Cys-129 are joined by a disulfide. 5 LRR repeats span residues 143-164 (NTAY…DFAS), 167-188 (DLRR…AFRK), 191-212 (QLRE…PTTL), 237-257 (DLHH…PLPE), and 258-279 (NLRA…TFCN). Cys-278 and Cys-311 are oxidised to a cystine. N-linked (GlcNAc...) asparagine glycosylation is present at Asn-282. An LRR 6 repeat occupies 289-309 (ALEDIRLDGNPINLSKTPQAY).

This sequence belongs to the small leucine-rich proteoglycan (SLRP) family. SLRP class III subfamily. In terms of processing, a long and a short form present in approximately equimolar amounts may arise by proteolysis or cleavage by exopeptidases. The O-linked polysaccharides on Thr-60 and Ser-95 are probably the mucin type linked to GalNAc. There is one glycosaminoglycan chain, known to be dermatan sulfate, and it is probably the O-glycosylation at Ser-64. Preferentially expressed in the zone of flattened chondrocytes of the developing limb cartilage.

It is found in the secreted. Its subcellular location is the extracellular space. The protein localises to the extracellular matrix. May have a role in bone formation and also in establishing the ordered structure of cartilage through matrix organization. The sequence is that of Epiphycan (EPYC) from Bos taurus (Bovine).